Consider the following 109-residue polypeptide: Flowering-promoting factor 1-like protein 1 (109 aa).

The D-box signature appears at 73 to 81 (RGSLDLISL).

The protein belongs to the FPF1 family. In terms of assembly, interacts with RPT4. Ubiquitinated. RPT4 mediates its proteasome-dependent degradation. As to expression, specifically expressed in the apical meristem, the elongation zone of root tip, steles of the branch zone, and the young lateral root. Also expressed in spikes. Expressed in roots and spikes (at protein level).

The protein localises to the cytoplasm. The protein resides in the nucleus. GTP-binding protein that functions in the development of root systems, which are mediated by auxin. Acts as a cell cycle regulator during root development. Proteasome-mediated degradation of the protein is necessary for the transition of metaphase to anaphase in mitosis. The polypeptide is Flowering-promoting factor 1-like protein 1 (RAA1) (Oryza sativa subsp. japonica (Rice)).